We begin with the raw amino-acid sequence, 705 residues long: Polyribonucleotide nucleotidyltransferase (705 aa).

Mg(2+) is bound by residues Asp486 and Asp492. Positions 553-612 (PRIHTIRINPDKIKDVIGKGGSVIRALTEETGTTIEIEDDGTVKIAATDGEKAKFAIRRI) constitute a KH domain. Residues 622–690 (GRIYQGKVTR…RQGRVRLSIK (69 aa)) form the S1 motif domain.

The protein belongs to the polyribonucleotide nucleotidyltransferase family. In terms of assembly, component of the RNA degradosome, which is a multiprotein complex involved in RNA processing and mRNA degradation. It depends on Mg(2+) as a cofactor.

The protein resides in the cytoplasm. The enzyme catalyses RNA(n+1) + phosphate = RNA(n) + a ribonucleoside 5'-diphosphate. In terms of biological role, involved in mRNA degradation. Catalyzes the phosphorolysis of single-stranded polyribonucleotides processively in the 3'- to 5'-direction. This is Polyribonucleotide nucleotidyltransferase from Serratia proteamaculans (strain 568).